Reading from the N-terminus, the 681-residue chain is Methionine--tRNA ligase (681 aa).

The 'HIGH' region motif lies at 12-22; that stretch reads PYANGSIHLGH. Zn(2+) is bound by residues C143, C146, C156, and C159. The 'KMSKS' region signature appears at 327 to 331; sequence KMSKS. K330 serves as a coordination point for ATP. A compositionally biased stretch (basic and acidic residues) spans 545-557; it reads FEKSNPEKAKQDP. The interval 545-566 is disordered; it reads FEKSNPEKAKQDPSKSNTNEVK. The 102-residue stretch at 580-681 folds into the tRNA-binding domain; the sequence is ELSKVELRVG…RDASPGDLLK (102 aa).

This sequence belongs to the class-I aminoacyl-tRNA synthetase family. MetG type 1 subfamily. Homodimer. The cofactor is Zn(2+).

It localises to the cytoplasm. The catalysed reaction is tRNA(Met) + L-methionine + ATP = L-methionyl-tRNA(Met) + AMP + diphosphate. Its function is as follows. Is required not only for elongation of protein synthesis but also for the initiation of all mRNA translation through initiator tRNA(fMet) aminoacylation. This chain is Methionine--tRNA ligase, found in Leptospira biflexa serovar Patoc (strain Patoc 1 / ATCC 23582 / Paris).